A 396-amino-acid chain; its full sequence is Putative nickel insertion protein (396 aa).

The protein belongs to the LarC family.

This Methanosarcina barkeri (strain Fusaro / DSM 804) protein is Putative nickel insertion protein.